Consider the following 332-residue polypeptide: Tsukubadiene synthase (332 aa).

2 residues coordinate Mg(2+): aspartate 75 and glutamate 80. The DDXXXE motif signature appears at 75–80 (DDHLDE). Arginine 165 serves as a coordination point for substrate. Positions 212, 216, and 220 each coordinate Mg(2+). Residues 212–220 (SDLHSFQLE) carry the SXXXSXXXE motif motif. 298–299 (RY) contacts substrate.

The protein belongs to the terpene synthase family. Requires Mg(2+) as cofactor.

The catalysed reaction is (2E,6E,10E)-geranylgeranyl diphosphate = tsukubadiene + diphosphate. In terms of biological role, catalyzes the formation of the 5-9-5 ring skeleton (3S,6S,11R,14S)-tsukubadiene from geranylgeranyl diphosphate (GGPP) via a 1,11-cyclization and a 10Re,14Re-cyclization. This Streptomyces tsukubensis (strain DSM 42081 / NBRC 108919 / NRRL 18488 / 9993) protein is Tsukubadiene synthase.